The primary structure comprises 559 residues: NXPE family member 2 (559 aa).

Residues Ala17 to Leu37 traverse the membrane as a helical segment.

The protein belongs to the NXPE family.

It localises to the membrane. The protein is NXPE family member 2 (NXPE2) of Homo sapiens (Human).